Reading from the N-terminus, the 143-residue chain is Large ribosomal subunit protein uL11 (143 aa).

Belongs to the universal ribosomal protein uL11 family. In terms of assembly, part of the ribosomal stalk of the 50S ribosomal subunit. Interacts with L10 and the large rRNA to form the base of the stalk. L10 forms an elongated spine to which L12 dimers bind in a sequential fashion forming a multimeric L10(L12)X complex. Post-translationally, one or more lysine residues are methylated.

In terms of biological role, forms part of the ribosomal stalk which helps the ribosome interact with GTP-bound translation factors. The sequence is that of Large ribosomal subunit protein uL11 from Rhizorhabdus wittichii (strain DSM 6014 / CCUG 31198 / JCM 15750 / NBRC 105917 / EY 4224 / RW1) (Sphingomonas wittichii).